The sequence spans 419 residues: Tyrosine--tRNA ligase (419 aa).

Residue Tyr-34 coordinates L-tyrosine. The 'HIGH' region motif lies at 39-48 (PTADSLHLGN). Positions 169 and 173 each coordinate L-tyrosine. Positions 229 to 233 (KFGKS) match the 'KMSKS' region motif. Position 232 (Lys-232) interacts with ATP. The 67-residue stretch at 353–419 (LTLVELLISA…GKKKNFVLTY (67 aa)) folds into the S4 RNA-binding domain.

Belongs to the class-I aminoacyl-tRNA synthetase family. TyrS type 1 subfamily. In terms of assembly, homodimer.

The protein localises to the cytoplasm. The enzyme catalyses tRNA(Tyr) + L-tyrosine + ATP = L-tyrosyl-tRNA(Tyr) + AMP + diphosphate + H(+). Functionally, catalyzes the attachment of tyrosine to tRNA(Tyr) in a two-step reaction: tyrosine is first activated by ATP to form Tyr-AMP and then transferred to the acceptor end of tRNA(Tyr). The sequence is that of Tyrosine--tRNA ligase from Lactococcus lactis subsp. lactis (strain IL1403) (Streptococcus lactis).